We begin with the raw amino-acid sequence, 152 residues long: Large ribosomal subunit protein bL34c (152 aa).

The transit peptide at methionine 1 to alanine 91 directs the protein to the chloroplast.

In terms of assembly, component of the chloroplast large ribosomal subunit (LSU). Mature 70S chloroplast ribosomes of higher plants consist of a small (30S) and a large (50S) subunit. The 30S small subunit contains 1 molecule of ribosomal RNA (16S rRNA) and 24 different proteins. The 50S large subunit contains 3 rRNA molecules (23S, 5S and 4.5S rRNA) and 33 different proteins.

Its subcellular location is the plastid. The protein localises to the chloroplast. Its function is as follows. Component of the chloroplast ribosome (chloro-ribosome), a dedicated translation machinery responsible for the synthesis of chloroplast genome-encoded proteins, including proteins of the transcription and translation machinery and components of the photosynthetic apparatus. This is Large ribosomal subunit protein bL34c (RPL34) from Spinacia oleracea (Spinach).